We begin with the raw amino-acid sequence, 706 residues long: Choline transporter-like protein 2 (706 aa).

The Cytoplasmic segment spans residues Met1–Asp33. The residue at position 14 (Thr14) is a Phosphothreonine. Residues Ile34 to Ala54 traverse the membrane as a helical segment. Residues Trp55–Trp232 are Extracellular-facing. N-linked (GlcNAc...) asparagine glycosylation is found at Asn187 and Asn200. Residues Tyr233–Leu253 form a helical membrane-spanning segment. The Cytoplasmic segment spans residues Arg254 to Leu256. Residues Ala257–Leu277 traverse the membrane as a helical segment. At His278–Trp315 the chain is on the extracellular side. The helical transmembrane segment at Val316–Leu336 threads the bilayer. Over Arg337–Pro364 the chain is Cytoplasmic. Residues Leu365–Leu385 traverse the membrane as a helical segment. Residues Ser386 to Ala457 lie on the Extracellular side of the membrane. N-linked (GlcNAc...) asparagine glycans are attached at residues Asn397 and Asn417. Residues Asn458–Asn480 form a helical membrane-spanning segment. Residues Lys481–Ser504 lie on the Cytoplasmic side of the membrane. The chain crosses the membrane as a helical span at residues Leu505–Leu525. Over Asp526–Tyr563 the chain is Extracellular. A helical transmembrane segment spans residues Ile564–Leu584. Residues Met585–Asp599 lie on the Cytoplasmic side of the membrane. The helical transmembrane segment at Phe600–Phe620 threads the bilayer. Over Phe621–Tyr638 the chain is Extracellular. A helical transmembrane segment spans residues Trp639 to Val659. Residues Tyr660 to Ala706 are Cytoplasmic-facing.

Belongs to the CTL (choline transporter-like) family. As to quaternary structure, interacts with COCH. N-glycosylated.

The protein resides in the cell membrane. It is found in the mitochondrion outer membrane. It catalyses the reaction choline(out) + n H(+)(in) = choline(in) + n H(+)(out). The enzyme catalyses ethanolamine(out) + n H(+)(in) = ethanolamine(in) + n H(+)(out). Choline/H+ antiporter, mainly in mitochodria. Also acts as a low-affinity ethanolamine/H+ antiporter, regulating the supply of extracellular ethanolamine (Etn) for the CDP-Etn pathway, redistribute intracellular Etn and balance the CDP-Cho and CDP-Etn arms of the Kennedy pathway. This is Choline transporter-like protein 2 (SLC44A2) from Bos taurus (Bovine).